The chain runs to 1501 residues: Multidrug resistance protein CDR1 (1501 aa).

The disordered stretch occupies residues 1-30 (MSDSKMSSQDESKLEKAISQDSSSENHSIN). Over 1–513 (MSDSKMSSQD…NFLRMKGDPS (513 aa)) the chain is Cytoplasmic. A compositionally biased stretch (basic and acidic residues) spans 8 to 18 (SQDESKLEKAI). Positions 150–404 (LATEGFRHFQ…FEKMGWKCPQ (255 aa)) constitute an ABC transporter 1 domain. The helical transmembrane segment at 514–534 (IPIFSVFGQLVMGLILSSVFY) threads the bilayer. An N-linked (GlcNAc...) asparagine glycan is attached at asparagine 535. 4 helical membrane passes run 549–569 (AMFFAVLFNAFSSLLEIMSLF), 598–618 (LPVKLAMSMSFNFVFYFMVNF), 623–643 (GRFFFYWLMCIWCTFVMSHLF), and 655–675 (GAMTPATVLLLAMVIYTGFVI). N-linked (GlcNAc...) asparagine glycosylation is present at asparagine 724. Residues 765–785 (LGITIGFAVFFLAIYIALTEF) traverse the membrane as a helical segment. Residues 786-1195 (NKGAMQKGEI…TIVQDWRSPG (410 aa)) lie on the Cytoplasmic side of the membrane. The region spanning 859–1103 (FFWRDLTYQV…MINYFEKYGA (245 aa)) is the ABC transporter 2 domain. Position 895–902 (895–902 (GASGAGKT)) interacts with ATP. A run of 6 helical transmembrane segments spans residues 1196 to 1216 (YIYSKIFLVVSAALFNGFSFF), 1230 to 1250 (FSVFMFFIPFNTLVQQMLPYF), 1281 to 1301 (IPYQVAVGTIAFFCWYYPLGL), 1315 to 1335 (GVLMWMLVTAFYVYTATMGQL), 1356 to 1376 (MCLNFCGVLAGPDVLPGFWIF), and 1467 to 1487 (FGIFIAFIAINIILTVIFYWL).

It belongs to the ABC transporter superfamily. ABCG family. PDR (TC 3.A.1.205) subfamily.

The protein localises to the membrane. Functionally, transporter, whose physiological function is not yet established. Confers resistance to the chemical cycloheximide. The protein is Multidrug resistance protein CDR1 (CDR1) of Candida albicans (Yeast).